The primary structure comprises 245 residues: Oncostatin-M (245 aa).

Residues 1–26 (MGAQRMQRTLLSLVLRLLLLCTVATG) form the signal peptide. 2 disulfide bridges follow: cysteine 28–cysteine 135 and cysteine 71–cysteine 177. Residue asparagine 97 is glycosylated (N-linked (GlcNAc...) asparagine). 2 disordered regions span residues 143–171 (SSDP…STFQ) and 197–245 (WGER…APAR). A compositionally biased stretch (pro residues) spans 153–166 (QPGPGPTPLPPTPP). Residues 203 to 218 (RSRRHSPCRALKRGAR) are compositionally biased toward basic residues. Positions 207-245 (HSPCRALKRGARRTQPFPEIRRLAPRGQPPGSLWGAPAR) are excised as a propeptide.

This sequence belongs to the LIF/OSM family. In terms of processing, propeptide processing is not important for receptor binding activity but may be important growth-inhibitory activity.

It localises to the secreted. Its function is as follows. Growth regulator. Inhibits the proliferation of a number of tumor cell lines. It regulates cytokine production, including IL-6, G-CSF and GM-CSF from endothelial cells. Uses both type I OSM receptor (heterodimers composed of LIFR and IL6ST) and type II OSM receptor (heterodimers composed of OSMR and IL6ST). Involved in the maturation of fetal hepatocytes, thereby promoting liver development and regeneration. The chain is Oncostatin-M (OSM) from Bos taurus (Bovine).